A 218-amino-acid polypeptide reads, in one-letter code: Vacuolar protein-sorting-associated protein 37 homolog 2 (218 aa).

The tract at residues 1–51 (MFNFWGSKEQQQGQSRPSPEASATPWYSPSLVTSPSSSRPQTSGQIPSHVS) is disordered. A compositionally biased stretch (polar residues) spans 8–17 (KEQQQGQSRP). Low complexity predominate over residues 28–40 (SPSLVTSPSSSRP). The 82-residue stretch at 137–218 (QEKLNELENQ…HLAAKTSSIG (82 aa)) folds into the VPS37 C-terminal domain.

It belongs to the VPS37 family. Component of the endosomal sorting required for transport complex I (ESCRT-I), composed of ELC, VPS28 and VPS37. Interacts with ELC.

Its subcellular location is the endosome. Component of the ESCRT-I complex (endosomal sorting complex required for transport I), a regulator of vesicular trafficking process. Required for the sorting of endocytic ubiquitinated cargos into multivesicular bodies (MVBs). This Arabidopsis thaliana (Mouse-ear cress) protein is Vacuolar protein-sorting-associated protein 37 homolog 2 (VPS37-2).